The chain runs to 1148 residues: Envelopment polyprotein (1148 aa).

The N-terminal stretch at 1-23 is a signal peptide; the sequence is MGELSPVCLYLLLQGLLLCNTGA. Topologically, residues 24 to 495 are lumenal; the sequence is ARNLNELKME…VPGLHGWATM (472 aa). Cystine bridges form between Cys-34–Cys-159, Cys-68–Cys-165, Cys-117–Cys-136, Cys-141–Cys-146, Cys-183–Cys-193, and Cys-218–Cys-257. An N-linked (GlcNAc...) asparagine; by host glycan is attached at Asn-142. N-linked (GlcNAc...) asparagine; by host glycosylation occurs at Asn-357. 4 disulfide bridges follow: Cys-386–Cys-445, Cys-390–Cys-399, Cys-415–Cys-434, and Cys-462–Cys-485. N-linked (GlcNAc...) asparagine; by host glycosylation occurs at Asn-409. The chain crosses the membrane as a helical span at residues 496-516; it reads LLLLTFCFGWVLIPTITMILL. Residues 517–637 are Cytoplasmic-facing; it reads KILIAFAYLC…LSLFRYRSRF (121 aa). The binding to the ribonucleoprotein stretch occupies residues 526 to 543; that stretch reads CSKYNTDSKFRILIEKVK. 2 CCHC-type zinc fingers span residues 555–575 and 580–601; these read CEVCQYECETAKELESHRKSC and CPYCLNPSEATTSALQAHFKVC. 3 binding to the ribonucleoprotein regions span residues 598–615, 602–613, and 621–635; these read FKVCKLRSRFQENLRKSL, KLRSRFQENLRK, and MQGCYRTLSLFRYRS. The 24-residue stretch at 621–644 folds into the ITAM domain; that stretch reads MQGCYRTLSLFRYRSRFFVGLVWC. The short motif at 625–628 is the YxxL element; sequence YRTL. A helical membrane pass occupies residues 638–658; sequence FVGLVWCVLLVHHLIVWAASA. The Lumenal portion of the chain corresponds to 659-1114; that stretch reads ETQNLNAGWT…EWILGVLNGN (456 aa). 8 disulfides stabilise this stretch: Cys-745–Cys-780, Cys-749–Cys-787, Cys-761–Cys-894, Cys-775–Cys-905, Cys-790–Cys-913, Cys-816–Cys-825, Cys-833–Cys-842, and Cys-873–Cys-877. The tract at residues 767–787 is fusion loop; that stretch reads YEYETGWGCNPPDCPGVGTGC. N-linked (GlcNAc...) asparagine; by host glycosylation occurs at Asn-937. Cystine bridges form between Cys-979–Cys-1009, Cys-1002–Cys-1054, Cys-1019–Cys-1024, Cys-1055–Cys-1060, and Cys-1094–Cys-1098. The chain crosses the membrane as a helical span at residues 1115 to 1135; that stretch reads WMVVAVLVVLLILSILLFTLC. 2 binding to the ribonucleoprotein regions span residues 1131-1143 and 1131-1148; these read LFTLCCPRRPSYR and LFTLCCPRRPSYRKEHKP. Topologically, residues 1136–1148 are cytoplasmic; it reads CPRRPSYRKEHKP.

Belongs to the hantavirus envelope glycoprotein family. As to quaternary structure, homodimer. Homotetramer; forms heterotetrameric Gn-Gc spikes in the pre-fusion conformation. Interacts (via C-terminus) with the nucleoprotein. Interacts with host TUFM; this interaction contributes to the virus-induced degradation of mitochondria by autophagy, which leads to degradation of host MAVS and inhibition of type I interferon (IFN) responses. Interacts with host MAP1LC3B; this interaction contributes to the virus-induced degradation of mitochondria by autophagy, which leads to degradation of host MAVS and inhibition of type I interferon (IFN) responses. Homodimer. Homotetramer; forms heterotetrameric Gn-Gc spikes in the pre-fusion conformation. Homotrimer; forms homotrimer in the post-fusion conformation at acidic pH. Interacts (via C-terminus) with the nucleoprotein. In terms of processing, envelope polyprotein precursor is quickly cleaved in vivo just after synthesis, presumably by host signal peptidase.

Its subcellular location is the virion membrane. It is found in the host cell surface. It localises to the host Golgi apparatus membrane. The protein localises to the host endoplasmic reticulum membrane. The protein resides in the host mitochondrion. Forms homotetramers with glycoprotein C at the surface of the virion. Attaches the virion to host cell receptors including integrin ITGAV/ITGB3. This attachment induces virion internalization predominantly through clathrin-dependent endocytosis. Mediates the assembly and budding of infectious virus particles through its interaction with the nucleocapsid protein and the viral genome. May dysregulate normal immune and endothelial cell responses through an ITAM motif. Translocates to mitochondria, binds to host TUFM and recruits MAP1LC3B. These interactions induce mitochondrial autophagy and therefore destruction of host MAVS leading to inhibition of type I interferon (IFN) responses. Concomitant breakdown of glycoprotein N is apparently prevented by the nucleoprotein that may inhibit Gn-stimulated autophagosome-lysosome fusion. Interacts with the viral genomic RNA. In terms of biological role, forms homotetramers with glycoprotein N at the surface of the virion. Attaches the virion to host cell receptors including integrin ITGAV/ITGB3. This attachment induces virion internalization predominantly through clathrin-dependent endocytosis. Class II fusion protein that promotes fusion of viral membrane with host endosomal membrane after endocytosis of the virion. This chain is Envelopment polyprotein (GP), found in Homo sapiens (Human).